The chain runs to 203 residues: MAKAIAKALLEIEAVSLSPNDPFTWSSGIKSPIYCDNRVTLGYPEVRQHIRDGLCDLIETYFGDVEIVSGTATAGIPHAAYVSEKLALPMNYVRSKSKSHGKQNQIEGALSKGKKVVVIEDLISTGGSSITAVEALREAGADVIGVVAIFTYGLKKADEQFKQAQMPLYTLSNYNELIDVAKENGEISDNDIRSLVDWRDNLS.

Residues arginine 94, lysine 98, histidine 100, and 120-128 each bind 5-phospho-alpha-D-ribose 1-diphosphate; that span reads EDLISTGGS. Serine 124 is an orotate binding site.

It belongs to the purine/pyrimidine phosphoribosyltransferase family. PyrE subfamily. In terms of assembly, homodimer. Mg(2+) serves as cofactor.

The catalysed reaction is orotidine 5'-phosphate + diphosphate = orotate + 5-phospho-alpha-D-ribose 1-diphosphate. The protein operates within pyrimidine metabolism; UMP biosynthesis via de novo pathway; UMP from orotate: step 1/2. Its function is as follows. Catalyzes the transfer of a ribosyl phosphate group from 5-phosphoribose 1-diphosphate to orotate, leading to the formation of orotidine monophosphate (OMP). This is Orotate phosphoribosyltransferase from Staphylococcus saprophyticus subsp. saprophyticus (strain ATCC 15305 / DSM 20229 / NCIMB 8711 / NCTC 7292 / S-41).